Here is a 763-residue protein sequence, read N- to C-terminus: MSELLSFALFLASVLIYAWKAGRNTWWFAATLTVLGLFVVLNITLFASDYFTGDGINDAVLYTLTNSLTGAGVSKYILPGIGIVLGLTAVFGALGWILRRRRHHPHHFGYSLLALLLALGSVDASPAFRQITELVKSQSRDGDPDFAAYYKEPSKTIPDPKLNLVYIYGESLERTYFDNEAFPDLTPELGALKNEGLDFSHTQQLPGTDYTIAGMVASQCGIPLFAPFEGNASASVSSFFPQNICLGDILKNSGYQNYFVQGANLRFAGKDVFLKSHGFDHLYGSEELKSVVADPHYRNDWGFYDDTVLDEAWKKFEELSRSGQRFSLFTLTVDTHHPDGFISRTCNRKKYDFDGKPNQSFSAVSCSQENIATFINKIKASPWFKDTVIVVSSDHLAMNNTAWKYLNKQDRNNLFFVIRGDKPQQETLAVKRNTMDNGATVLDILGGDNYLGLGRSSLSGQSMSEIFLNIKEKTLAWKPDIIRLWKFPKEMKEFTIDQQKNMIAFSGSHFRLPLLLRVSDKRVEPLPESEYSAPLRFQLADFAPRDNFVWVDRCYKMAQLWAPELALSTDWCVSQGQLGGQQIVQHVDKTTWKGKTAFKDTVIDMARYKGNVDTLKIVDNDIRYKADSFIFNVAGAPEEVKQFSGISRPESWGRWSNAQLGDEVKIEYKHPLPKKFDLVITAKAYGNNASRPIPVRVGNEEQTLVLGNEVTTTTLHFDNPTDADTLVIVPPEPVSTNEGNILGHSPRKLGIGMVEIKVVEREG.

4 helical membrane-spanning segments follow: residues 1 to 21 (MSELLSFALFLASVLIYAWKA), 26 to 46 (WWFAATLTVLGLFVVLNITLF), 77 to 97 (ILPGIGIVLGLTAVFGALGWI), and 108 to 128 (FGYSLLALLLALGSVDASPAF).

The protein belongs to the OpgB family.

The protein localises to the cell inner membrane. The enzyme catalyses a phosphatidylglycerol + a membrane-derived-oligosaccharide D-glucose = a 1,2-diacyl-sn-glycerol + a membrane-derived-oligosaccharide 6-(glycerophospho)-D-glucose.. It functions in the pathway glycan metabolism; osmoregulated periplasmic glucan (OPG) biosynthesis. Transfers a phosphoglycerol residue from phosphatidylglycerol to the membrane-bound nascent glucan backbones. The chain is Phosphoglycerol transferase I from Escherichia coli O17:K52:H18 (strain UMN026 / ExPEC).